Consider the following 425-residue polypeptide: uncharacterized protein (425 aa).

Residues 2–53 (SFNLLDLPIVPRQKALKYLEPIDLFELSLCSKRMAQSVRDLKIEASAHFITL) enclose the F-box domain.

This is an uncharacterized protein from Caenorhabditis elegans.